Here is a 1244-residue protein sequence, read N- to C-terminus: DNA polymerase beta (1244 aa).

Repeat copies occupy residues 1069 to 1072, 1073 to 1076, 1077 to 1080, 1081 to 1084, 1085 to 1088, 1089 to 1092, 1093 to 1096, 1097 to 1100, 1101 to 1104, 1105 to 1108, 1109 to 1112, 1113 to 1116, and 1117 to 1120. Residues 1069–1118 form a disordered region; that stretch reads AGNPAGNPAGNPAGNPAGNPAGNPAGNPAGNPAGNPAGNPAGNPAGNPAG. A 13 X 4 AA tandem repeats of A-G-N-P region spans residues 1069–1120; that stretch reads AGNPAGNPAGNPAGNPAGNPAGNPAGNPAGNPAGNPAGNPAGNPAGNPAGNP.

Belongs to the DNA polymerase type-B family.

The enzyme catalyses DNA(n) + a 2'-deoxyribonucleoside 5'-triphosphate = DNA(n+1) + diphosphate. Functionally, DNA-directed DNA polymerase involved in viral DNA replication. The sequence is that of DNA polymerase beta (DPOL) from African swine fever virus (isolate Pig/Portugal/Lis 60/1960) (ASFV).